The primary structure comprises 129 residues: UPF0325 protein Spro_3794 (129 aa).

It belongs to the UPF0325 family.

The protein is UPF0325 protein Spro_3794 of Serratia proteamaculans (strain 568).